A 594-amino-acid chain; its full sequence is Aspartate--tRNA(Asp/Asn) ligase (594 aa).

Residue glutamate 173 coordinates L-aspartate. An aspartate region spans residues 197 to 200 (QLFK). Arginine 219 is a binding site for L-aspartate. Residues 219 to 221 (RDE) and glutamine 228 contribute to the ATP site. Histidine 451 lines the L-aspartate pocket. Glutamate 485 contacts ATP. Arginine 492 contacts L-aspartate. Residue 537-540 (GWDR) coordinates ATP. The segment at 566–594 (PLTDAPAPITAQQRKESGIDAQPKRVQQA) is disordered.

It belongs to the class-II aminoacyl-tRNA synthetase family. Type 1 subfamily. As to quaternary structure, homodimer.

It is found in the cytoplasm. It carries out the reaction tRNA(Asx) + L-aspartate + ATP = L-aspartyl-tRNA(Asx) + AMP + diphosphate. Aspartyl-tRNA synthetase with relaxed tRNA specificity since it is able to aspartylate not only its cognate tRNA(Asp) but also tRNA(Asn). Reaction proceeds in two steps: L-aspartate is first activated by ATP to form Asp-AMP and then transferred to the acceptor end of tRNA(Asp/Asn). The sequence is that of Aspartate--tRNA(Asp/Asn) ligase from Mycobacterium tuberculosis (strain CDC 1551 / Oshkosh).